A 376-amino-acid chain; its full sequence is DNA replication and repair protein RecF (376 aa).

Glycine 30 to serine 37 contacts ATP.

Belongs to the RecF family.

Its subcellular location is the cytoplasm. Its function is as follows. The RecF protein is involved in DNA metabolism; it is required for DNA replication and normal SOS inducibility. RecF binds preferentially to single-stranded, linear DNA. It also seems to bind ATP. The protein is DNA replication and repair protein RecF of Nostoc sp. (strain PCC 7120 / SAG 25.82 / UTEX 2576).